The primary structure comprises 170 residues: Thialysine N-epsilon-acetyltransferase (170 aa).

Residues 4–166 (TRIREARESD…FRFEGEAMRE (163 aa)) enclose the N-acetyltransferase domain. 27-28 (FE) contacts substrate. Lys-29 is modified (N6-acetyllysine). A substrate-binding site is contributed by Glu-92. Residues 94 to 96 (IYV), 102 to 107 (GQGIGT), 133 to 135 (NKK), and Tyr-140 each bind acetyl-CoA. Tyr-140 functions as the Proton donor in the catalytic mechanism. Glu-152 is a binding site for substrate.

Belongs to the acetyltransferase family. In terms of assembly, homodimer.

The protein resides in the cytoplasm. It carries out the reaction S-(2-aminoethyl)-L-cysteine + acetyl-CoA = S-(2-acetamidoethyl)-L-cysteine + CoA + H(+). It catalyses the reaction an alkane-alpha,omega-diamine + acetyl-CoA = an N-acetylalkane-alpha,omega-diamine + CoA + H(+). Its function is as follows. Catalyzes the N-acetylation of the amino acid thialysine (S-(2-aminoethyl)-L-cysteine), a L-lysine analog with the 4-methylene group substituted with a sulfur. May also catalyze acetylation of polyamines, such as norspermidine, spermidine or spermine. However, ability to acetylate polyamines is weak, suggesting that it does not act as a diamine acetyltransferase in vivo. The protein is Thialysine N-epsilon-acetyltransferase of Mus musculus (Mouse).